The chain runs to 206 residues: Ribosomal RNA small subunit methyltransferase G (206 aa).

S-adenosyl-L-methionine contacts are provided by residues Gly-74, Leu-79, 125–126 (VE), and Arg-140.

Belongs to the methyltransferase superfamily. RNA methyltransferase RsmG family.

The protein resides in the cytoplasm. It catalyses the reaction guanosine(527) in 16S rRNA + S-adenosyl-L-methionine = N(7)-methylguanosine(527) in 16S rRNA + S-adenosyl-L-homocysteine. Functionally, specifically methylates the N7 position of guanine in position 527 of 16S rRNA. This Shewanella sp. (strain ANA-3) protein is Ribosomal RNA small subunit methyltransferase G.